The following is a 387-amino-acid chain: Alpha-sarcoglycan (387 aa).

The first 23 residues, 1–23 (MAAAVTWIPLLAGLLAGLRDTKA), serve as a signal peptide directing secretion. The Extracellular segment spans residues 24-293 (QQTTLHLLVG…RDFLTDALVT (270 aa)). 2 N-linked (GlcNAc...) asparagine glycosylation sites follow: Asn-174 and Asn-246. Residues 294–314 (LLVPLLVALLLTLLLAYIMCF) form a helical membrane-spanning segment. At 315–387 (RREGRLKRDM…AQMPLILDQH (73 aa)) the chain is on the cytoplasmic side. Position 377 is a phosphoserine (Ser-377).

Belongs to the sarcoglycan alpha/epsilon family. As to quaternary structure, cross-link to form 2 major subcomplexes: one consisting of SGCB, SGCD and SGCG and the other consisting of SGCB and SGCD. The association between SGCB and SGCG is particularly strong while SGCA is loosely associated with the other sarcoglycans. Interacts with the syntrophin SNTA1. Striated muscle, both skeletal and cardiac.

The protein localises to the cell membrane. The protein resides in the sarcolemma. Its subcellular location is the cytoplasm. It localises to the cytoskeleton. Functionally, component of the sarcoglycan complex, a subcomplex of the dystrophin-glycoprotein complex which forms a link between the F-actin cytoskeleton and the extracellular matrix. This Mus musculus (Mouse) protein is Alpha-sarcoglycan (Sgca).